Here is a 372-residue protein sequence, read N- to C-terminus: NAD(P)H-quinone oxidoreductase subunit 1 (372 aa).

A run of 8 helical transmembrane segments spans residues 29–49 (WIPL…LVVV), 97–117 (WLFT…YLIV), 130–150 (VGIF…LMSG), 176–196 (LAFS…IDIV), 204–224 (ILGW…IAAL), 254–274 (FGLF…VFAI), 308–328 (SLGI…AVLL), and 347–367 (FLLP…LAFP).

This sequence belongs to the complex I subunit 1 family. As to quaternary structure, NDH-1 is composed of at least 11 different subunits.

It is found in the cellular thylakoid membrane. It carries out the reaction a plastoquinone + NADH + (n+1) H(+)(in) = a plastoquinol + NAD(+) + n H(+)(out). The enzyme catalyses a plastoquinone + NADPH + (n+1) H(+)(in) = a plastoquinol + NADP(+) + n H(+)(out). In terms of biological role, NDH-1 shuttles electrons from an unknown electron donor, via FMN and iron-sulfur (Fe-S) centers, to quinones in the respiratory and/or the photosynthetic chain. The immediate electron acceptor for the enzyme in this species is believed to be plastoquinone. Couples the redox reaction to proton translocation, and thus conserves the redox energy in a proton gradient. This is NAD(P)H-quinone oxidoreductase subunit 1 from Rippkaea orientalis (strain PCC 8801 / RF-1) (Cyanothece sp. (strain PCC 8801)).